A 266-amino-acid polypeptide reads, in one-letter code: MKSTNISRSFSKIKKEKRIALMPFLMAGDPDLETTAKILLELQANGADMIELGIPYSDPLADGPIIQLAASRALSAGTSPDRVFKMLFELRDQLKIPIILFTYSNPLINKGLEEFCWQASKVGVSGLVVPDLPLEEAEKLSDIAESKEIDLVLLVAPTTPKDRMKKIAATSNGFTYLVSVTGVTGERSSLEDNVGSLVQQLKDSSSSPIAVGFGISDVKHIEQVREWGADGAIVGSALVKRIANASIEMKVEEAGSFCKELRAATN.

Active-site proton acceptor residues include glutamate 51 and aspartate 62.

Belongs to the TrpA family. In terms of assembly, tetramer of two alpha and two beta chains.

The enzyme catalyses (1S,2R)-1-C-(indol-3-yl)glycerol 3-phosphate + L-serine = D-glyceraldehyde 3-phosphate + L-tryptophan + H2O. It participates in amino-acid biosynthesis; L-tryptophan biosynthesis; L-tryptophan from chorismate: step 5/5. The alpha subunit is responsible for the aldol cleavage of indoleglycerol phosphate to indole and glyceraldehyde 3-phosphate. This Prochlorococcus marinus (strain NATL1A) protein is Tryptophan synthase alpha chain.